Here is a 421-residue protein sequence, read N- to C-terminus: Serine hydroxymethyltransferase (421 aa).

Residues Leu121 and 125–127 contribute to the (6S)-5,6,7,8-tetrahydrofolate site; that span reads GHL. Lys230 carries the post-translational modification N6-(pyridoxal phosphate)lysine.

The protein belongs to the SHMT family. Homodimer. It depends on pyridoxal 5'-phosphate as a cofactor.

It localises to the cytoplasm. It carries out the reaction (6R)-5,10-methylene-5,6,7,8-tetrahydrofolate + glycine + H2O = (6S)-5,6,7,8-tetrahydrofolate + L-serine. Its pathway is one-carbon metabolism; tetrahydrofolate interconversion. It participates in amino-acid biosynthesis; glycine biosynthesis; glycine from L-serine: step 1/1. Catalyzes the reversible interconversion of serine and glycine with tetrahydrofolate (THF) serving as the one-carbon carrier. This reaction serves as the major source of one-carbon groups required for the biosynthesis of purines, thymidylate, methionine, and other important biomolecules. Also exhibits THF-independent aldolase activity toward beta-hydroxyamino acids, producing glycine and aldehydes, via a retro-aldol mechanism. The protein is Serine hydroxymethyltransferase of Carboxydothermus hydrogenoformans (strain ATCC BAA-161 / DSM 6008 / Z-2901).